Here is a 259-residue protein sequence, read N- to C-terminus: UPF0246 protein Aave_1172 (259 aa).

The protein belongs to the UPF0246 family.

This is UPF0246 protein Aave_1172 from Paracidovorax citrulli (strain AAC00-1) (Acidovorax citrulli).